Consider the following 201-residue polypeptide: MNVNQVDLETVCGVTSVLPENTQPEFAFAGKSNVGKSSLINGLMNRKSFARTSSQPGKTQTINFYHLNEKLYFVDLPGYGYAKVSSELKAKWGKMIEKYLRTSTQLKVIFLLIDIRHEPSANDKDMYEWIVHNGFEPVIIATKLDKINRSQRDKHIKMVRTGLCAGANTKILPFSSLSKEGKDDIWRCIEQFLEVPDTENK.

The EngB-type G domain occupies 22–195 (TQPEFAFAGK…WRCIEQFLEV (174 aa)). GTP contacts are provided by residues 30 to 37 (GKSNVGKS), 57 to 61 (GKTQT), 75 to 78 (DLPG), 142 to 145 (TKLD), and 174 to 176 (FSS). Mg(2+)-binding residues include Ser37 and Thr59.

This sequence belongs to the TRAFAC class TrmE-Era-EngA-EngB-Septin-like GTPase superfamily. EngB GTPase family. The cofactor is Mg(2+).

In terms of biological role, necessary for normal cell division and for the maintenance of normal septation. This Lachnoclostridium phytofermentans (strain ATCC 700394 / DSM 18823 / ISDg) (Clostridium phytofermentans) protein is Probable GTP-binding protein EngB.